The following is a 314-amino-acid chain: tRNA dimethylallyltransferase (314 aa).

Residue 16–23 (GPTGVGKT) participates in ATP binding. 18 to 23 (TGVGKT) serves as a coordination point for substrate. Positions 41–44 (DSMQ) are interaction with substrate tRNA.

Belongs to the IPP transferase family. As to quaternary structure, monomer. It depends on Mg(2+) as a cofactor.

The catalysed reaction is adenosine(37) in tRNA + dimethylallyl diphosphate = N(6)-dimethylallyladenosine(37) in tRNA + diphosphate. Functionally, catalyzes the transfer of a dimethylallyl group onto the adenine at position 37 in tRNAs that read codons beginning with uridine, leading to the formation of N6-(dimethylallyl)adenosine (i(6)A). The sequence is that of tRNA dimethylallyltransferase from Desulfosudis oleivorans (strain DSM 6200 / JCM 39069 / Hxd3) (Desulfococcus oleovorans).